The chain runs to 275 residues: MANIKLKNYQSYAKINLFLHILNKRDDGYHNLQTWFTFLDLKDHISFRFNNSNKIEITSNIQIASKEDNLIYKAVKEFQEAYNIESIGVDIDIIKNIPMGAGLGGGSSNAATTLIALRDYYLPELSNEQMIPLATKLGADVPIFVYGRSAWAEGIGDVLYSKDFEQQYVVLVKPNIHISTKEFFESENLVKTKNMLPRDLSFDTSVMHNDFENVFFAKYPEFKSQLDEIDQDFRMTGTGSCFYLLSKDLNKLQQLARKVDKSLDKWVVKTLNYAY.

Lys14 is a catalytic residue. ATP is bound at residue 98 to 108 (PMGAGLGGGSS). The active site involves Asp140.

It belongs to the GHMP kinase family. IspE subfamily.

The catalysed reaction is 4-CDP-2-C-methyl-D-erythritol + ATP = 4-CDP-2-C-methyl-D-erythritol 2-phosphate + ADP + H(+). It functions in the pathway isoprenoid biosynthesis; isopentenyl diphosphate biosynthesis via DXP pathway; isopentenyl diphosphate from 1-deoxy-D-xylulose 5-phosphate: step 3/6. In terms of biological role, catalyzes the phosphorylation of the position 2 hydroxy group of 4-diphosphocytidyl-2C-methyl-D-erythritol. This chain is 4-diphosphocytidyl-2-C-methyl-D-erythritol kinase, found in Francisella philomiragia subsp. philomiragia (strain ATCC 25017 / CCUG 19701 / FSC 153 / O#319-036).